We begin with the raw amino-acid sequence, 530 residues long: MGYKKIKFGDDARKSLAIGVNILADAVKTTLGPKGRNVILDKSFNSPLVTKDGVSVAKEIELKDKFENMGAQMVKEVASKTSDVAGDGTTTATVLAQTIVNEGIKAVISGINPMDLKRGIDKTIYQAVLELKKISIPCVDTLSISQVGTISANGETIIGKIISDAMNRVGKNGVITVDEGRGFEDELEVVEGMQFDRGYISPYFISNQENMSSILENCLILITDKKISNVRDIVNILELISKKNKSLFIIAEDIEGEALATLVINNIRGVLKILAVKAPGFGDRRKEILKDISILTGSTLISEELGIKLENIDLSLLGFAKKITSTKENTIILGGGGDENSIKKRINTIKKQISESLSDYDKEKLQERMAKLAGGVAVIRVGSATEIEMKEKKARIEDALHSTRAAVEEGVVIGGGVSLIRILNKLKNLQGDNEDQNYGIQIALKALEAPLRQIVKNSGGEPSIVLNNIKSSSNNFGYDASTGKYGDMFKMGIIDPVKVTRSALQSAGSIGGLLITTEAMIADYSDEKSV.

ATP is bound by residues 30-33 (TLGP), Lys51, 87-91 (DGTTT), Gly415, and Asp495.

This sequence belongs to the chaperonin (HSP60) family. Forms a cylinder of 14 subunits composed of two heptameric rings stacked back-to-back. Interacts with the co-chaperonin GroES.

It is found in the cytoplasm. The enzyme catalyses ATP + H2O + a folded polypeptide = ADP + phosphate + an unfolded polypeptide.. Together with its co-chaperonin GroES, plays an essential role in assisting protein folding. The GroEL-GroES system forms a nano-cage that allows encapsulation of the non-native substrate proteins and provides a physical environment optimized to promote and accelerate protein folding. This is Chaperonin GroEL from Carsonella ruddii (strain PV).